Reading from the N-terminus, the 351-residue chain is Protein pelota homolog (351 aa).

This sequence belongs to the eukaryotic release factor 1 family. Pelota subfamily. In terms of assembly, monomer. It depends on a divalent metal cation as a cofactor.

Its subcellular location is the cytoplasm. Functionally, may function in recognizing stalled ribosomes, interact with stem-loop structures in stalled mRNA molecules, and effect endonucleolytic cleavage of the mRNA. May play a role in the release non-functional ribosomes and degradation of damaged mRNAs. Has endoribonuclease activity. This is Protein pelota homolog from Methanosphaera stadtmanae (strain ATCC 43021 / DSM 3091 / JCM 11832 / MCB-3).